Reading from the N-terminus, the 524-residue chain is NAD(P)H-quinone oxidoreductase chain 4, chloroplastic (524 aa).

14 consecutive transmembrane segments (helical) span residues 4–24 (YPWL…IPLI), 31–51 (LIRW…TYVF), 87–107 (IALV…AWPV), 113–133 (LFYF…LAQD), 134–154 (LLLF…LLSM), 167–187 (FILY…TISL), 211–231 (ILVY…FPFH), 242–262 (HYST…YGFI), 275–295 (IFAP…ALVS), 308–328 (SSVS…DLGL), 330–350 (GAIL…FLAG), 386–406 (LALP…GIVA), 417–437 (IITC…LSMV), and 465–485 (VFII…PDLT).

Belongs to the complex I subunit 4 family.

The protein localises to the plastid. Its subcellular location is the chloroplast thylakoid membrane. It catalyses the reaction a plastoquinone + NADH + (n+1) H(+)(in) = a plastoquinol + NAD(+) + n H(+)(out). It carries out the reaction a plastoquinone + NADPH + (n+1) H(+)(in) = a plastoquinol + NADP(+) + n H(+)(out). In Staurastrum punctulatum (Green alga), this protein is NAD(P)H-quinone oxidoreductase chain 4, chloroplastic.